The primary structure comprises 216 residues: ATP phosphoribosyltransferase (216 aa).

Belongs to the ATP phosphoribosyltransferase family. Short subfamily. As to quaternary structure, heteromultimer composed of HisG and HisZ subunits.

The protein resides in the cytoplasm. The catalysed reaction is 1-(5-phospho-beta-D-ribosyl)-ATP + diphosphate = 5-phospho-alpha-D-ribose 1-diphosphate + ATP. It participates in amino-acid biosynthesis; L-histidine biosynthesis; L-histidine from 5-phospho-alpha-D-ribose 1-diphosphate: step 1/9. In terms of biological role, catalyzes the condensation of ATP and 5-phosphoribose 1-diphosphate to form N'-(5'-phosphoribosyl)-ATP (PR-ATP). Has a crucial role in the pathway because the rate of histidine biosynthesis seems to be controlled primarily by regulation of HisG enzymatic activity. The protein is ATP phosphoribosyltransferase of Nitrosomonas europaea (strain ATCC 19718 / CIP 103999 / KCTC 2705 / NBRC 14298).